The sequence spans 349 residues: FK506-binding protein-like (349 aa).

The residue at position 3 (T3) is a Phosphothreonine. A disordered region spans residues 36 to 55 (RQQPRDPPTETLELEVSPDP). TPR repeat units lie at residues 210–243 (AREE…LLTL), 252–285 (TVLH…EPGH), and 286–319 (LKAL…DPKN).

In terms of assembly, forms a ternary complex with CDKN1A/p21 and HSP90AB1/Hsp90. In terms of tissue distribution, ubiquitously expressed with higher levels in testis.

Its function is as follows. May be involved in response to X-ray. Regulates p21 protein stability by binding to Hsp90 and p21. This Homo sapiens (Human) protein is FK506-binding protein-like (FKBPL).